The chain runs to 218 residues: Tegument protein UL51 homolog (218 aa).

Cys-11 carries the S-palmitoyl cysteine; by host lipid modification. The tract at residues 199–218 (APPPVVRQPEHSGPTELALT) is disordered.

It belongs to the herpesviridae UL51 family. As to quaternary structure, homodimer. Interacts with BBRF2; the BBRF2-BSRF1 complexes oligomerize which might play a role in tethering the viral nucleocapsids to the host Golgi membrane during secondary envelopment. Interacts with BGLF3.5. Interacts with BALF1. Interacts with glycoprotein gB. Interacts with glycoprotein heterodimer gH/gL. Phosphorylated. In terms of processing, palmitoylation is necessary for Golgi localization.

It localises to the host cytoplasm. The protein resides in the virion. The protein localises to the host Golgi apparatus. Its function is as follows. Plays several roles during the time course of infection, including egress of virus particles from the perinuclear space and secondary envelopment of cytoplasmic capsids that bud into specific trans-Golgi network (TGN)-derived membranes. The polypeptide is Tegument protein UL51 homolog (Homo sapiens (Human)).